The sequence spans 214 residues: Phosphatidylserine decarboxylase proenzyme (214 aa).

Catalysis depends on Ser-182, which acts as the Schiff-base intermediate with substrate; via pyruvic acid. A Pyruvic acid (Ser); by autocatalysis modification is found at Ser-182.

Belongs to the phosphatidylserine decarboxylase family. PSD-A subfamily. In terms of assembly, heterodimer of a large membrane-associated beta subunit and a small pyruvoyl-containing alpha subunit. Pyruvate serves as cofactor. Is synthesized initially as an inactive proenzyme. Formation of the active enzyme involves a self-maturation process in which the active site pyruvoyl group is generated from an internal serine residue via an autocatalytic post-translational modification. Two non-identical subunits are generated from the proenzyme in this reaction, and the pyruvate is formed at the N-terminus of the alpha chain, which is derived from the carboxyl end of the proenzyme. The post-translation cleavage follows an unusual pathway, termed non-hydrolytic serinolysis, in which the side chain hydroxyl group of the serine supplies its oxygen atom to form the C-terminus of the beta chain, while the remainder of the serine residue undergoes an oxidative deamination to produce ammonia and the pyruvoyl prosthetic group on the alpha chain.

Its subcellular location is the cell membrane. The enzyme catalyses a 1,2-diacyl-sn-glycero-3-phospho-L-serine + H(+) = a 1,2-diacyl-sn-glycero-3-phosphoethanolamine + CO2. It participates in phospholipid metabolism; phosphatidylethanolamine biosynthesis; phosphatidylethanolamine from CDP-diacylglycerol: step 2/2. Catalyzes the formation of phosphatidylethanolamine (PtdEtn) from phosphatidylserine (PtdSer). In Burkholderia vietnamiensis (strain G4 / LMG 22486) (Burkholderia cepacia (strain R1808)), this protein is Phosphatidylserine decarboxylase proenzyme.